Consider the following 320-residue polypeptide: GRAM domain-containing protein 2A (320 aa).

Residues threonine 33–glycine 56 form a disordered region. The GRAM domain occupies glutamine 74–lysine 141. A helical transmembrane segment spans residues leucine 278 to phenylalanine 298.

In terms of processing, phosphorylated.

The protein resides in the endoplasmic reticulum membrane. It localises to the cell membrane. Functionally, participates in the organization ofendoplasmic reticulum-plasma membrane contact sites (EPCS) with pleiotropic functions including STIM1 recruitment and calcium homeostasis. Constitutive tether that co-localize with ESYT2/3 tethers at endoplasmic reticulum-plasma membrane contact sites in a phosphatidylinositol lipid-dependent manner. Pre-marks the subset of phosphtidylinositol 4,5-biphosphate (PI(4,5)P2)-enriched EPCS destined for the store operated calcium entry pathway (SOCE). This Mus musculus (Mouse) protein is GRAM domain-containing protein 2A.